The chain runs to 222 residues: MVLLSKFDFSGKESGKVELPDAFFAEGKEQSVKDYLVAIQANKRQWSACTRGRSEVSHSTRKPFRQKGTGNARQGCLAAPQFRGGGIVFGPKPKFDQHVRINKKERRAAIRLLLAQKIQTGKLIVADNSVFISSLNAPKTKEALRFLKECNVECRGVLFVDGLDHVGSNENLRLSVRNLAAVRGFTYGENINGYDIAAARNIVVSEKALELLVENLVSTTKD.

Positions 50 to 72 (TRGRSEVSHSTRKPFRQKGTGNA) are disordered.

This sequence belongs to the universal ribosomal protein uL4 family. Part of the 50S ribosomal subunit.

Its function is as follows. One of the primary rRNA binding proteins, this protein initially binds near the 5'-end of the 23S rRNA. It is important during the early stages of 50S assembly. It makes multiple contacts with different domains of the 23S rRNA in the assembled 50S subunit and ribosome. Functionally, forms part of the polypeptide exit tunnel. The polypeptide is Large ribosomal subunit protein uL4 (Chlamydia muridarum (strain MoPn / Nigg)).